The chain runs to 460 residues: Malonyl-coenzyme A:anthocyanin 3-O-glucoside-6''-O-malonyltransferase (460 aa).

Catalysis depends on proton acceptor residues His173 and Asp400.

This sequence belongs to the plant acyltransferase family.

It carries out the reaction an anthocyanidin 3-O-beta-D-glucoside + malonyl-CoA = an anthocyanidin 3-O-(6-O-malonyl-beta-D-glucoside) + CoA. Completely inhibited by 5 mM N-ethylmaleimide or 0.1 mM Cu(2+). Partially inhibited by 0.1 mM Fe(2+) or 0.1 mM Hg(2+). In terms of biological role, catalyzes the transfer of the malonyl group from malonyl-CoA to pelargonidin 3-O-glucoside to produce pelargonidin 3-O-6''-O-malonylglucoside. Can also transfer the malonyl group from malonyl-CoA to cyanidin 3-O-glucoside, delphinidin 3-O-glucoside and quercetin 3-O-glucoside. The sequence is that of Malonyl-coenzyme A:anthocyanin 3-O-glucoside-6''-O-malonyltransferase from Dahlia pinnata (Pinnate dahlia).